The chain runs to 101 residues: Small ribosomal subunit protein uS14 (101 aa).

It belongs to the universal ribosomal protein uS14 family. As to quaternary structure, part of the 30S ribosomal subunit. Contacts proteins S3 and S10.

Its function is as follows. Binds 16S rRNA, required for the assembly of 30S particles and may also be responsible for determining the conformation of the 16S rRNA at the A site. This Burkholderia multivorans (strain ATCC 17616 / 249) protein is Small ribosomal subunit protein uS14.